Consider the following 245-residue polypeptide: tRNA1(Val) (adenine(37)-N6)-methyltransferase (245 aa).

Belongs to the methyltransferase superfamily. tRNA (adenine-N(6)-)-methyltransferase family.

It is found in the cytoplasm. The enzyme catalyses adenosine(37) in tRNA1(Val) + S-adenosyl-L-methionine = N(6)-methyladenosine(37) in tRNA1(Val) + S-adenosyl-L-homocysteine + H(+). Functionally, specifically methylates the adenine in position 37 of tRNA(1)(Val) (anticodon cmo5UAC). In Erwinia tasmaniensis (strain DSM 17950 / CFBP 7177 / CIP 109463 / NCPPB 4357 / Et1/99), this protein is tRNA1(Val) (adenine(37)-N6)-methyltransferase.